Consider the following 222-residue polypeptide: 7-cyano-7-deazaguanine synthase (222 aa).

14-24 (FSGGQDSTTCL) provides a ligand contact to ATP. Positions 190, 199, 202, and 205 each coordinate Zn(2+).

Belongs to the QueC family. In terms of assembly, homodimer. Zn(2+) serves as cofactor.

It carries out the reaction 7-carboxy-7-deazaguanine + NH4(+) + ATP = 7-cyano-7-deazaguanine + ADP + phosphate + H2O + H(+). The protein operates within purine metabolism; 7-cyano-7-deazaguanine biosynthesis. Functionally, catalyzes the ATP-dependent conversion of 7-carboxy-7-deazaguanine (CDG) to 7-cyano-7-deazaguanine (preQ(0)). The sequence is that of 7-cyano-7-deazaguanine synthase from Staphylococcus aureus (strain Mu3 / ATCC 700698).